The chain runs to 294 residues: tRNA pseudouridine synthase B (294 aa).

The active-site Nucleophile is Asp39.

Belongs to the pseudouridine synthase TruB family. Type 1 subfamily.

The enzyme catalyses uridine(55) in tRNA = pseudouridine(55) in tRNA. In terms of biological role, responsible for synthesis of pseudouridine from uracil-55 in the psi GC loop of transfer RNAs. The polypeptide is tRNA pseudouridine synthase B (Streptococcus pyogenes serotype M2 (strain MGAS10270)).